Here is a 310-residue protein sequence, read N- to C-terminus: Probable cobalamin biosynthesis protein CobD (310 aa).

5 helical membrane-spanning segments follow: residues 53-73, 80-100, 157-177, 215-235, and 289-309; these read LVFG…IFFT, LISN…FSIG, DSII…AFIY, IAGI…VPAI, and AVDY…FNLI.

This sequence belongs to the CobD/CbiB family.

The protein localises to the cell membrane. The protein operates within cofactor biosynthesis; adenosylcobalamin biosynthesis. Its function is as follows. Converts cobyric acid to cobinamide by the addition of aminopropanol on the F carboxylic group. The sequence is that of Probable cobalamin biosynthesis protein CobD from Methanococcus vannielii (strain ATCC 35089 / DSM 1224 / JCM 13029 / OCM 148 / SB).